The primary structure comprises 225 residues: Transmembrane protein C16orf54 homolog (225 aa).

Residues 32 to 52 (PCIPIMLGLASLTAFFIITTA) traverse the membrane as a helical segment. Disordered stretches follow at residues 106–163 (DRAP…ERPH) and 178–200 (EAGL…EPDW). Phosphothreonine is present on residues Thr-113 and Thr-117. The span at 122–140 (ATAPPATSAPYSSLSSLVP) shows a compositional bias: low complexity. Residue Ser-195 is modified to Phosphoserine.

The protein resides in the membrane. This chain is Transmembrane protein C16orf54 homolog, found in Mus musculus (Mouse).